A 456-amino-acid polypeptide reads, in one-letter code: Acetylcholine receptor subunit alpha (456 aa).

The N-terminal stretch at 1-20 (MNYFILILPILPYLYGPAVC) is a signal peptide. Over 21-230 (SEDETRLVKT…ITYHFLLLRL (210 aa)) the chain is Extracellular. Cystine bridges form between Cys148-Cys162 and Cys212-Cys213. The N-linked (GlcNAc...) asparagine glycan is linked to Asn161. 3 helical membrane-spanning segments follow: residues 231–255 (PLYFIVNVIIPCMLFSFLTGLVFYL), 263–281 (MTLSISVLLSLTVFLLVIV), and 297–316 (YMLFTMIFVIASIIITVIVI). The Cytoplasmic portion of the chain corresponds to 317 to 428 (NTHHRSPSTH…WKFVAMVLDH (112 aa)). The chain crosses the membrane as a helical span at residues 429–447 (ILLCVFMAVCIIGTLGVFA).

The protein belongs to the ligand-gated ion channel (TC 1.A.9) family. Acetylcholine receptor (TC 1.A.9.1) subfamily. Alpha-1/CHRNA1 sub-subfamily. As to quaternary structure, one of the alpha chains that assemble within the acetylcholine receptor, a pentamer of two alpha chains, a beta, a delta, and a gamma or epsilon chains.

It is found in the postsynaptic cell membrane. Its subcellular location is the cell membrane. It carries out the reaction K(+)(in) = K(+)(out). The enzyme catalyses Na(+)(in) = Na(+)(out). Upon acetylcholine binding, the AChR responds by an extensive change in conformation that affects all subunits and leads to opening of an ion-conducting channel across the plasma membrane. In Danio rerio (Zebrafish), this protein is Acetylcholine receptor subunit alpha (chrna1).